We begin with the raw amino-acid sequence, 367 residues long: Glutamate 5-kinase (367 aa).

Position 9 (lysine 9) interacts with ATP. Residues serine 49, aspartate 136, and asparagine 148 each contribute to the substrate site. Residues 168-169 and 210-216 each bind ATP; these read TD and TGGMKSK. Residues 276–350 form the PUA domain; the sequence is SGQIEIDAGA…GMQSQHIQAR (75 aa).

Belongs to the glutamate 5-kinase family.

Its subcellular location is the cytoplasm. The catalysed reaction is L-glutamate + ATP = L-glutamyl 5-phosphate + ADP. It functions in the pathway amino-acid biosynthesis; L-proline biosynthesis; L-glutamate 5-semialdehyde from L-glutamate: step 1/2. Catalyzes the transfer of a phosphate group to glutamate to form L-glutamate 5-phosphate. This chain is Glutamate 5-kinase, found in Bacillus cereus (strain ZK / E33L).